Reading from the N-terminus, the 549-residue chain is Leiomodin-2 (549 aa).

The interval 1–42 is tropomyosin-binding; it reads MSTFGYRRGLSKYESIDEDELLASLTAEELKELERELEDIEP. Positions 1–47 are interaction with tropomyosin alpha; that stretch reads MSTFGYRRGLSKYESIDEDELLASLTAEELKELERELEDIEPDRNLP. Interaction with actin stretches follow at residues 1-164, 165-499, and 523-542; these read MSTF…PDNS, KPKT…KEIK, and AHEN…LRRV. Phosphoserine is present on residues Ser-11, Ser-15, and Ser-24. Disordered regions lie at residues 91-166, 179-200, 358-455, and 469-534; these read KLAE…NSKP, TNGN…HPCG, MDKQ…PGKK, and ESAQ…IRGS. Acidic residues-rich tracts occupy residues 95–105 and 113–143; these read EDKEESEEELI and VSEE…EEVT. 2 stretches are compositionally biased toward polar residues: residues 150-163 and 179-192; these read INGT…NPDN and TNGN…NTES. Over residues 358–376 the composition is skewed to basic and acidic residues; that stretch reads MDKQRQKRMQEQKQQEGHD. Residues 390–401 show a composition bias toward polar residues; sequence TPGSSPYASPRQ. Phosphoserine is present on Ser-406. The span at 420-452 shows a compositional bias: pro residues; that stretch reads PPSPVAPPPPPPPPPLPPHMLPPPPPPPAPPLP. Positions 457–515 form a coiled coil; the sequence is ITRNIAEVIKQQESAQRALQNGQRKKKGKKVKKQPNNILKEIKNSLRSVQEKKMEESSR. Positions 469–478 are enriched in polar residues; that stretch reads ESAQRALQNG. A compositionally biased stretch (basic residues) spans 479–489; the sequence is QRKKKGKKVKK. Basic and acidic residues predominate over residues 496-514; sequence KEIKNSLRSVQEKKMEESS. The WH2 domain occupies 523–542; that stretch reads AHENLMEAIRGSSIRQLRRV.

This sequence belongs to the tropomodulin family. Can bind at least three actin monomers and thereby provides a nucleus for actin filament formation. Interacts (via N-terminus) with tropomyosin alpha (TPM1) (via N-terminus). May also interact with TPM2 (via N-terminus). Interacts with FLII.

Its subcellular location is the cytoplasm. It localises to the myofibril. The protein resides in the sarcomere. It is found in the m line. The protein localises to the cytoskeleton. Functionally, mediates nucleation of actin filaments and thereby promotes actin polymerization. Plays a role in the regulation of actin filament length. Required for normal sarcomere organization in the heart, and for normal heart function. The protein is Leiomodin-2 (Lmod2) of Rattus norvegicus (Rat).